A 352-amino-acid polypeptide reads, in one-letter code: S-adenosylmethionine:tRNA ribosyltransferase-isomerase (352 aa).

This sequence belongs to the QueA family. In terms of assembly, monomer.

The protein localises to the cytoplasm. The enzyme catalyses 7-aminomethyl-7-carbaguanosine(34) in tRNA + S-adenosyl-L-methionine = epoxyqueuosine(34) in tRNA + adenine + L-methionine + 2 H(+). It participates in tRNA modification; tRNA-queuosine biosynthesis. Functionally, transfers and isomerizes the ribose moiety from AdoMet to the 7-aminomethyl group of 7-deazaguanine (preQ1-tRNA) to give epoxyqueuosine (oQ-tRNA). In Solibacter usitatus (strain Ellin6076), this protein is S-adenosylmethionine:tRNA ribosyltransferase-isomerase.